The primary structure comprises 160 residues: Epithelial membrane protein 1 (160 aa).

A helical membrane pass occupies residues 1-21 (MLVLLAGLFVVHIATAIMLFV). Asn-35 and Asn-43 each carry an N-linked (GlcNAc...) asparagine glycan. A run of 2 helical transmembrane segments spans residues 67–87 (FMILSIIFSIISLVVFVFQLF) and 95–115 (FFLSGSTMLVCWLCILVGVSI). Asn-128 carries N-linked (GlcNAc...) asparagine glycosylation. The helical transmembrane segment at 137–157 (FILTWICFCFSFIIGILYMVL) threads the bilayer.

It belongs to the PMP-22/EMP/MP20 family.

It localises to the membrane. This is Epithelial membrane protein 1 (Emp1) from Mus musculus (Mouse).